The primary structure comprises 54 residues: Califin-B (54 aa).

Residues Cys-25 and Cys-53 are joined by a disulfide bond. A Leucine amide modification is found at Leu-36.

The protein belongs to the molluscan ELH family. This protein consists of a large 36-residue subunit, bound by a single disulfide-bond to a small 18-residue subunit.

It is found in the secreted. Its function is as follows. Injected in sexually mature animals califin B excites LB and LC cells of the abdominal ganglion and cause egg-laying. This Aplysia californica (California sea hare) protein is Califin-B.